The sequence spans 356 residues: Chorismate synthase (356 aa).

Residue Arg-44 coordinates NADP(+). FMN-binding positions include 121-123 (HFS), Gly-278, 293-297 (KPTPS), and Arg-320.

This sequence belongs to the chorismate synthase family. The cofactor is FMNH2.

The catalysed reaction is 5-O-(1-carboxyvinyl)-3-phosphoshikimate = chorismate + phosphate. The protein operates within metabolic intermediate biosynthesis; chorismate biosynthesis; chorismate from D-erythrose 4-phosphate and phosphoenolpyruvate: step 7/7. Functionally, catalyzes the anti-1,4-elimination of the C-3 phosphate and the C-6 proR hydrogen from 5-enolpyruvylshikimate-3-phosphate (EPSP) to yield chorismate, which is the branch point compound that serves as the starting substrate for the three terminal pathways of aromatic amino acid biosynthesis. This reaction introduces a second double bond into the aromatic ring system. This Pyrococcus abyssi (strain GE5 / Orsay) protein is Chorismate synthase.